The following is a 570-amino-acid chain: Sulfite reductase [NADPH] hemoprotein beta-component (570 aa).

Cys433, Cys439, Cys478, and Cys482 together coordinate [4Fe-4S] cluster. Residue Cys482 coordinates siroheme.

This sequence belongs to the nitrite and sulfite reductase 4Fe-4S domain family. As to quaternary structure, alpha(8)-beta(8). The alpha component is a flavoprotein, the beta component is a hemoprotein. Siroheme is required as a cofactor. The cofactor is [4Fe-4S] cluster.

It carries out the reaction hydrogen sulfide + 3 NADP(+) + 3 H2O = sulfite + 3 NADPH + 4 H(+). Its pathway is sulfur metabolism; hydrogen sulfide biosynthesis; hydrogen sulfide from sulfite (NADPH route): step 1/1. In terms of biological role, component of the sulfite reductase complex that catalyzes the 6-electron reduction of sulfite to sulfide. This is one of several activities required for the biosynthesis of L-cysteine from sulfate. The protein is Sulfite reductase [NADPH] hemoprotein beta-component of Aeromonas hydrophila subsp. hydrophila (strain ATCC 7966 / DSM 30187 / BCRC 13018 / CCUG 14551 / JCM 1027 / KCTC 2358 / NCIMB 9240 / NCTC 8049).